The chain runs to 556 residues: MRFLTKFLLFLATVYFGLKYACESPLRAQYPQLQLACHYSQPALWNDYLLKNSPAYKNSVHPQLVVAKGKYEELVQPHVKDVCKRVHTQLDRIDKKKYCDLAHSYANLAYQKAQFYYSISAGKYVHDFCKSDLYNKNLKRHVERAKEDLSKAYHLAVVRIPQLFTRENVEKFTSSASAYINEKTESLKKEAKQITSDVKKTVESEIKKRTTSSESEEEPIVSTSTIVKTITRTRHSSSSTTSTKSAEETSEKNLETKEEEDITDIEIDHQAQLQRDFDKWTSNIDKKVKMVNKMLVRDVKKHLKPKIDANDKLFKDKLKVLHKEANDNFQLINKAIQDINCTQGIDPETGKQIYFDSEGKSQIEKYITREMIRTMLNDTQTTLNSLVADIENDVSKILEDFKKIAENSREQHLTTFEEWGDIMINEWSKKLAYLDVLAPHEDAEHEGKSKTELSEKNWKKFMAIKKQILDARDKMAKRQIKISEFKLLLDNVQNTLQAVTNENGEYLYILRAQANLAFQERERLEKEAEEAKLRKEAGEVNESSEEEQIVEEPISA.

An N-terminal signal peptide occupies residues 1–21 (MRFLTKFLLFLATVYFGLKYA). Residues 135–201 (NKNLKRHVER…KQITSDVKKT (67 aa)) adopt a coiled-coil conformation. The segment covering 190 to 208 (EAKQITSDVKKTVESEIKK) has biased composition (basic and acidic residues). 2 disordered regions span residues 190 to 263 (EAKQ…EDIT) and 534 to 556 (RKEAGEVNESSEEEQIVEEPISA). Over residues 220–244 (IVSTSTIVKTITRTRHSSSSTTSTK) the composition is skewed to low complexity. Residues 245–256 (SAEETSEKNLET) are compositionally biased toward basic and acidic residues. A coiled-coil region spans residues 481-547 (KISEFKLLLD…GEVNESSEEE (67 aa)).

This sequence belongs to the SHE10 family. As to quaternary structure, component of the mitochondria-localized RNase mitochondrial RNA-processing (RNase MRP) composed of one single RNA encoded by the NME1 gene and at least 31 proteins. Absent in the nucleus-localized RNase MRP (NuMRP).

It localises to the mitochondrion. Functionally, involved in spore wall assembly. May be a component of the mitochondrial RNase MRP (MtMRP), a ribonucleoprotein endoribonuclease involved in the cleaving RNA transcripts to generate primers for DNA replication in mitochondria. This Candida glabrata (strain ATCC 2001 / BCRC 20586 / JCM 3761 / NBRC 0622 / NRRL Y-65 / CBS 138) (Yeast) protein is Outer spore wall assembly protein SHE10.